We begin with the raw amino-acid sequence, 397 residues long: MEPQEGKTRFHDFNLAPELMHAIQDLGFPYCTPIQAGVLGFTLKGKDAIGRAQTGTGKTAAFLISIIEQLTQTPPPAERYMGEPRALIIAPTRELVVQIAKDAADLTKYTNLNVMTFVGGMDFDKQLKQLEARHCDILVATPGRLLDFNQRGEVHLDMVEVMVLDEADRMLDMGFIPQVRQIIRQTPHKGERQTLLFSATFTEDVMNLAKQWTTDPSIVEIESLNVASDNVEQHIYAVAGADKYKLLYNLVTDNGWERVMVFANRKDEVRRIEERLVRDGVNAAQLSGDVPQHKRIKTLEGFREGKIRVLVATDVAGRGIHIDGISHVINFTLPEVPDDYVHRIGRTGRAGADGVSISFAGEDDSYQLPAIEEKLGRKISCETPPTHLLRAVVRQTN.

The Q motif signature appears at 8–36 (TRFHDFNLAPELMHAIQDLGFPYCTPIQA). A Helicase ATP-binding domain is found at 39 to 219 (LGFTLKGKDA…KQWTTDPSIV (181 aa)). Position 52–59 (52–59 (AQTGTGKT)) interacts with ATP. A DEAD box motif is present at residues 165-168 (DEAD). The region spanning 242–392 (DKYKLLYNLV…TPPTHLLRAV (151 aa)) is the Helicase C-terminal domain.

It belongs to the DEAD box helicase family. RhlB subfamily. Component of the RNA degradosome, which is a multiprotein complex involved in RNA processing and mRNA degradation.

It localises to the cytoplasm. The catalysed reaction is ATP + H2O = ADP + phosphate + H(+). Functionally, DEAD-box RNA helicase involved in RNA degradation. Has RNA-dependent ATPase activity and unwinds double-stranded RNA. The polypeptide is ATP-dependent RNA helicase RhlB (Pseudomonas syringae pv. tomato (strain ATCC BAA-871 / DC3000)).